We begin with the raw amino-acid sequence, 183 residues long: TATA box-binding protein-like 1 (183 aa).

It belongs to the TBP family. Binds TFIIA and TFIIB. In terms of tissue distribution, present in the brain, heart, liver and gizzard.

The protein resides in the cytoplasm. The protein localises to the nucleus. In terms of biological role, part of a specialized transcription system that mediates the transcription of most ribosomal proteins through the 5'-TCT-3' motif which is a core promoter element at these genes. Seems to also mediate the transcription of NF1. Does not bind the TATA box. The sequence is that of TATA box-binding protein-like 1 (TBPL1) from Gallus gallus (Chicken).